Reading from the N-terminus, the 882-residue chain is Alanine--tRNA ligase (882 aa).

4 residues coordinate Zn(2+): H567, H571, C669, and H673.

This sequence belongs to the class-II aminoacyl-tRNA synthetase family. Zn(2+) serves as cofactor.

Its subcellular location is the cytoplasm. It catalyses the reaction tRNA(Ala) + L-alanine + ATP = L-alanyl-tRNA(Ala) + AMP + diphosphate. Catalyzes the attachment of alanine to tRNA(Ala) in a two-step reaction: alanine is first activated by ATP to form Ala-AMP and then transferred to the acceptor end of tRNA(Ala). Also edits incorrectly charged Ser-tRNA(Ala) and Gly-tRNA(Ala) via its editing domain. The protein is Alanine--tRNA ligase of Thermosynechococcus vestitus (strain NIES-2133 / IAM M-273 / BP-1).